The sequence spans 67 residues: UPF0434 protein Reut_A0592 (67 aa).

Belongs to the UPF0434 family.

The chain is UPF0434 protein Reut_A0592 from Cupriavidus pinatubonensis (strain JMP 134 / LMG 1197) (Cupriavidus necator (strain JMP 134)).